A 322-amino-acid polypeptide reads, in one-letter code: AA9 family lytic polysaccharide monooxygenase A (322 aa).

Positions 1 to 15 (MKVLSLLAAASAASA) are cleaved as a signal peptide. Residues histidine 16 and histidine 96 each contribute to the Cu(2+) site. 2 disulfide bridges follow: cysteine 54-cysteine 182 and cysteine 152-cysteine 237. Residues histidine 168 and glutamine 177 each coordinate O2. Threonine 228 and threonine 236 each carry an O-linked (Man...) threonine glycan. Positions 286–322 (CTAAQWAQCGGMGFSGCTTCASPYTCKKMNDYYSQCS) constitute a CBM1 domain.

The protein belongs to the polysaccharide monooxygenase AA9 family. The cofactor is Cu(2+).

Its subcellular location is the secreted. The enzyme catalyses [(1-&gt;4)-beta-D-glucosyl]n+m + reduced acceptor + O2 = 4-dehydro-beta-D-glucosyl-[(1-&gt;4)-beta-D-glucosyl]n-1 + [(1-&gt;4)-beta-D-glucosyl]m + acceptor + H2O.. Its function is as follows. Lytic polysaccharide monooxygenase (LPMO) that depolymerizes crystalline and amorphous polysaccharides via the oxidation of scissile alpha- or beta-(1-4)-glycosidic bonds, yielding C4 oxidation products. Catalysis by LPMOs requires the reduction of the active-site copper from Cu(II) to Cu(I) by a reducing agent and H(2)O(2) or O(2) as a cosubstrate. Active on tamarind xyloglucan and konjac glucomannan. This Neurospora crassa (strain ATCC 24698 / 74-OR23-1A / CBS 708.71 / DSM 1257 / FGSC 987) protein is AA9 family lytic polysaccharide monooxygenase A (gh61-1).